The following is a 49-amino-acid chain: Large ribosomal subunit protein bL33B (49 aa).

This sequence belongs to the bacterial ribosomal protein bL33 family.

The protein is Large ribosomal subunit protein bL33B of Geobacillus thermodenitrificans (strain NG80-2).